Reading from the N-terminus, the 645-residue chain is Sentrin-specific protease 1 (645 aa).

Residues 1–200 are interaction with CCAR2; it reads MDDIADRMRM…REIYRQLLQM (200 aa). Phosphoserine occurs at positions 57, 117, and 157. The disordered stretch occupies residues 92-117; it reads QSANGQWRNSTPSSSSSLQKSRNSRS. Positions 99–117 are enriched in low complexity; it reads RNSTPSSSSSLQKSRNSRS. The Nuclear localization signal motif lies at 171-177; it reads PKKTQRR. A disordered region spans residues 285–313; that stretch reads KDSGTLHHPHHHHSVPHQPDNLAASNTQS. Protease regions lie at residues 451–614 and 451–615; these read LTIT…YADC and LTIT…ADCI. Active-site residues include His534 and Asp551. Residues 575 to 578 carry the Nuclear localization signal motif; it reads KKRK. Cys604 acts as the Nucleophile in catalysis. The short motif at 629-635 is the Nuclear localization signal element; it reads PYFRKRM. The Nuclear export signal signature appears at 636-645; the sequence is VWEILHRKLL.

It belongs to the peptidase C48 family. In terms of assembly, interacts with RBM33; promoting ALKBH5 desumoylation and subsequent activation.

Its subcellular location is the nucleus. The protein localises to the cytoplasm. In terms of biological role, protease that catalyzes two essential functions in the SUMO pathway. The first is the hydrolysis of an alpha-linked peptide bond at the C-terminal end of the small ubiquitin-like modifier (SUMO) propeptides, SUMO1, SUMO2 and SUMO3 leading to the mature form of the proteins. The second is the deconjugation of SUMO1, SUMO2 and SUMO3 from targeted proteins, by cleaving an epsilon-linked peptide bond between the C-terminal glycine of the mature SUMO and the lysine epsilon-amino group of the target protein. Deconjugates SUMO1 from HIPK2. Deconjugates SUMO1 from HDAC1 and BHLHE40/DEC1, which decreases its transcriptional repression activity. Deconjugates SUMO1 from CLOCK, which decreases its transcriptional activation activity. Deconjugates SUMO2 from MTA1. Inhibits N(6)-methyladenosine (m6A) RNA methylation by mediating SUMO1 deconjugation from METTL3 and ALKBH5: METTL3 inhibits the m6A RNA methyltransferase activity, while ALKBH5 desumoylation promotes m6A demethylation. Desumoylates CCAR2 which decreases its interaction with SIRT1. Deconjugates SUMO1 from GPS2. This chain is Sentrin-specific protease 1 (SENP1), found in Pongo abelii (Sumatran orangutan).